The sequence spans 319 residues: 3'-5' exoribonuclease YhaM (319 aa).

The OB DNA-binding region spans 12–90; the sequence is EAVDGYLLIK…QLKIASIRPT (79 aa). Residues 163–279 enclose the HD domain; sequence HVVSMLRIGK…LHLIDNIDAK (117 aa).

This sequence belongs to the YhaM family.

Shows a 3'-5' exoribonuclease activity. The polypeptide is 3'-5' exoribonuclease YhaM (Shouchella clausii (strain KSM-K16) (Alkalihalobacillus clausii)).